The sequence spans 234 residues: Proteasome subunit alpha (234 aa).

This sequence belongs to the peptidase T1A family. As to quaternary structure, the 20S proteasome core is composed of 14 alpha and 14 beta subunits that assemble into four stacked heptameric rings, resulting in a barrel-shaped structure. The two inner rings, each composed of seven catalytic beta subunits, are sandwiched by two outer rings, each composed of seven alpha subunits. The catalytic chamber with the active sites is on the inside of the barrel. Has a gated structure, the ends of the cylinder being occluded by the N-termini of the alpha-subunits. Is capped by the proteasome-associated ATPase, ARC.

The protein localises to the cytoplasm. The protein operates within protein degradation; proteasomal Pup-dependent pathway. The formation of the proteasomal ATPase ARC-20S proteasome complex, likely via the docking of the C-termini of ARC into the intersubunit pockets in the alpha-rings, may trigger opening of the gate for substrate entry. Interconversion between the open-gate and close-gate conformations leads to a dynamic regulation of the 20S proteasome proteolysis activity. In terms of biological role, component of the proteasome core, a large protease complex with broad specificity involved in protein degradation. This chain is Proteasome subunit alpha, found in Acidothermus cellulolyticus (strain ATCC 43068 / DSM 8971 / 11B).